A 185-amino-acid polypeptide reads, in one-letter code: Prenylated Rab acceptor protein 1 (185 aa).

Topologically, residues 1 to 78 (MAAEKDQQKD…RNVEYYQSNY (78 aa)) are cytoplasmic. The interval 30 to 54 (AGRERLERRRATIRPWSSFVDQRRF) is required for interaction with prenylated RAB3A and VAMP2. 2 helical membrane-spanning segments follow: residues 79–94 (VFVF…VTSP) and 95–112 (MLLV…ILYL). Residues 113 to 131 (RTLQSKFVLFGREVSPAHQ) are Cytoplasmic-facing. The next 2 helical transmembrane spans lie at 132–148 (YALA…LAGA) and 149–165 (GSAV…VIGS). Positions 165–185 (SHAAFHQMEAVDGEELQMEPV) are required for interaction with GDI1. Topologically, residues 166–185 (HAAFHQMEAVDGEELQMEPV) are cytoplasmic. The tract at residues 175–185 (VDGEELQMEPV) is required for interaction with prenylated RAB3A and VAMP2. The interval 175–185 (VDGEELQMEPV) is homodimerization.

It belongs to the PRA1 family. In terms of assembly, homodimer. Interacts with VAMP2 (synaptobrevin-2), prenylated Rab proteins, GDI1, NDRG1 and PCLO.

It is found in the cell membrane. The protein localises to the cytoplasm. The protein resides in the golgi apparatus. It localises to the cytoplasmic vesicle. Its subcellular location is the secretory vesicle. It is found in the synaptic vesicle. Functionally, general Rab protein regulator required for vesicle formation from the Golgi complex. May control vesicle docking and fusion by mediating the action of Rab GTPases to the SNARE complexes. In addition it inhibits the removal of Rab GTPases from the membrane by GDI1. The sequence is that of Prenylated Rab acceptor protein 1 (RABAC1) from Canis lupus familiaris (Dog).